The primary structure comprises 156 residues: Transcription elongation factor GreA (156 aa).

The stretch at 46 to 73 (AEYHAAREKQSFIEGRIKELEALLSLAE) forms a coiled coil.

Belongs to the GreA/GreB family.

In terms of biological role, necessary for efficient RNA polymerase transcription elongation past template-encoded arresting sites. The arresting sites in DNA have the property of trapping a certain fraction of elongating RNA polymerases that pass through, resulting in locked ternary complexes. Cleavage of the nascent transcript by cleavage factors such as GreA or GreB allows the resumption of elongation from the new 3'terminus. GreA releases sequences of 2 to 3 nucleotides. The sequence is that of Transcription elongation factor GreA from Cereibacter sphaeroides (strain ATCC 17025 / ATH 2.4.3) (Rhodobacter sphaeroides).